The sequence spans 400 residues: MKNYHAPDEKGFFGEHGGLFVSETLIPALQELADAYKAAKNDPEFWEAFRHDLKHYVGRPSPVYHAARLSEHLGGAQIWLKREDLNHTGAHKVNNTIGQALLAKRMGKKRVIAETGAGQHGVASATVAARFGMTCDVYMGADDIQRQMPNVFRMKLLGANVVGVESGSRTLKDAMNEAMREWVARVDDTFYIIGTAAGPAPYPEMVRDFQCVIGNEAKAQMQEAIGRQPDVAVACVGGGSNAIGLFHPYIGEENVRLVGVEAGGLGVNTPDHAAPITSGAPIGVLHGFRSYLMQDENGQVLGTHSVSAGLDYPGIGPEHSHLHDIKRVEYTVAKDDEALEAFDLLCRFEGIIPALESSHAVAWAVKNAPKMGKDQVILVNLSGRGDKDINTVAKLKGIKL.

Lys-92 bears the N6-(pyridoxal phosphate)lysine mark.

Belongs to the TrpB family. Tetramer of two alpha and two beta chains. Pyridoxal 5'-phosphate is required as a cofactor.

It catalyses the reaction (1S,2R)-1-C-(indol-3-yl)glycerol 3-phosphate + L-serine = D-glyceraldehyde 3-phosphate + L-tryptophan + H2O. Its pathway is amino-acid biosynthesis; L-tryptophan biosynthesis; L-tryptophan from chorismate: step 5/5. In terms of biological role, the beta subunit is responsible for the synthesis of L-tryptophan from indole and L-serine. This is Tryptophan synthase beta chain from Neisseria meningitidis serogroup A / serotype 4A (strain DSM 15465 / Z2491).